A 430-amino-acid polypeptide reads, in one-letter code: Adenylosuccinate synthetase (430 aa).

GTP is bound by residues 12–18 (GDEGKGK) and 40–42 (GHT). D13 serves as the catalytic Proton acceptor. 2 residues coordinate Mg(2+): D13 and G40. IMP is bound by residues 13 to 16 (DEGK), 38 to 41 (NAGH), T130, R144, Q224, T239, and R303. H41 acts as the Proton donor in catalysis. Substrate is bound at residue 299–305 (TTTGRKR). Residues R305, 331-333 (KLD), and 413-415 (STS) each bind GTP.

The protein belongs to the adenylosuccinate synthetase family. Homodimer. It depends on Mg(2+) as a cofactor.

Its subcellular location is the cytoplasm. It catalyses the reaction IMP + L-aspartate + GTP = N(6)-(1,2-dicarboxyethyl)-AMP + GDP + phosphate + 2 H(+). It functions in the pathway purine metabolism; AMP biosynthesis via de novo pathway; AMP from IMP: step 1/2. In terms of biological role, plays an important role in the de novo pathway of purine nucleotide biosynthesis. Catalyzes the first committed step in the biosynthesis of AMP from IMP. In Ruegeria pomeroyi (strain ATCC 700808 / DSM 15171 / DSS-3) (Silicibacter pomeroyi), this protein is Adenylosuccinate synthetase.